Here is a 368-residue protein sequence, read N- to C-terminus: N-acetylneuraminate epimerase (368 aa).

A signal peptide spans 1–19; that stretch reads MNKTITALAIMMASFAANA. 7 Kelch repeats span residues 40–84, 86–137, 139–173, 174–219, 222–265, 287–336, and 338–367; these read TVYI…AFID, NLYV…FVHN, KAYV…KINA, HYFD…VNKG, TWLI…VAGG, ENYQ…PWNN, and LLII…VTVQ. Residue glutamate 228 is the Proton acceptor of the active site.

As to quaternary structure, homodimer.

It is found in the periplasm. It catalyses the reaction N-acetyl-alpha-neuraminate = N-acetyl-beta-neuraminate. In terms of biological role, converts alpha-N-acetylneuranimic acid (Neu5Ac) to the beta-anomer, accelerating the equilibrium between the alpha- and beta-anomers. Probably facilitates sialidase-negative bacteria to compete successfully for limited amounts of extracellular Neu5Ac, which is likely taken up in the beta-anomer. In addition, the rapid removal of sialic acid from solution might be advantageous to the bacterium to damp down host responses. Forms linear aceneuramate during interconversion of Neu5Ac anomers. The polypeptide is N-acetylneuraminate epimerase (nanM) (Escherichia coli (strain K12)).